The following is a 71-amino-acid chain: DNA-directed RNA polymerase subunit epsilon (71 aa).

It belongs to the RNA polymerase subunit epsilon family. In terms of assembly, RNAP is composed of a core of 2 alpha, a beta and a beta' subunit. The core is associated with a delta subunit, and at least one of epsilon or omega. When a sigma factor is associated with the core the holoenzyme is formed, which can initiate transcription.

It carries out the reaction RNA(n) + a ribonucleoside 5'-triphosphate = RNA(n+1) + diphosphate. A non-essential component of RNA polymerase (RNAP). This chain is DNA-directed RNA polymerase subunit epsilon, found in Staphylococcus saprophyticus subsp. saprophyticus (strain ATCC 15305 / DSM 20229 / NCIMB 8711 / NCTC 7292 / S-41).